The following is a 289-amino-acid chain: Energy-coupling factor transporter ATP-binding protein EcfA2 (289 aa).

Residues 3–246 enclose the ABC transporter domain; sequence IRFKQVDFTY…TQWLKEKQLG (244 aa). Residue 40–47 participates in ATP binding; sequence GHTGSGKS.

This sequence belongs to the ABC transporter superfamily. Energy-coupling factor EcfA family. Forms a stable energy-coupling factor (ECF) transporter complex composed of 2 membrane-embedded substrate-binding proteins (S component), 2 ATP-binding proteins (A component) and 2 transmembrane proteins (T component).

The protein localises to the cell membrane. ATP-binding (A) component of a common energy-coupling factor (ECF) ABC-transporter complex. Unlike classic ABC transporters this ECF transporter provides the energy necessary to transport a number of different substrates. This Enterococcus faecalis (strain ATCC 700802 / V583) protein is Energy-coupling factor transporter ATP-binding protein EcfA2.